A 297-amino-acid polypeptide reads, in one-letter code: Phosphatidylglycerol--prolipoprotein diacylglyceryl transferase (297 aa).

Transmembrane regions (helical) follow at residues 20–40 (FLTIRWYGFLISVSVIIGLFV), 50–70 (INPLYISEILPSLIIFSIIGA), 105–125 (AVWEGGIAIHGGLIGGLLSII), and 133–153 (IHLKTFIDILIPSIILGQSIG). R154 lines the a 1,2-diacyl-sn-glycero-3-phospho-(1'-sn-glycerol) pocket. Helical transmembrane passes span 193-213 (PTFLYESLWNFLIFILLIFVF), 225-245 (GFISCLYLISYSFGRFWIEGL), and 266-286 (AQFISIFLFSSGLIGIFFLRL).

The protein belongs to the Lgt family.

Its subcellular location is the cell inner membrane. It carries out the reaction L-cysteinyl-[prolipoprotein] + a 1,2-diacyl-sn-glycero-3-phospho-(1'-sn-glycerol) = an S-1,2-diacyl-sn-glyceryl-L-cysteinyl-[prolipoprotein] + sn-glycerol 1-phosphate + H(+). It functions in the pathway protein modification; lipoprotein biosynthesis (diacylglyceryl transfer). Functionally, catalyzes the transfer of the diacylglyceryl group from phosphatidylglycerol to the sulfhydryl group of the N-terminal cysteine of a prolipoprotein, the first step in the formation of mature lipoproteins. The protein is Phosphatidylglycerol--prolipoprotein diacylglyceryl transferase of Prochlorococcus marinus (strain MIT 9312).